We begin with the raw amino-acid sequence, 449 residues long: Glutamyl-tRNA reductase (449 aa).

Residues 58–61 (TCNR), serine 121, 126–128 (ETQ), and glutamine 132 contribute to the substrate site. Cysteine 59 acts as the Nucleophile in catalysis. 203–208 (GLGEMA) is a binding site for NADP(+).

It belongs to the glutamyl-tRNA reductase family. In terms of assembly, homodimer.

The catalysed reaction is (S)-4-amino-5-oxopentanoate + tRNA(Glu) + NADP(+) = L-glutamyl-tRNA(Glu) + NADPH + H(+). It participates in porphyrin-containing compound metabolism; protoporphyrin-IX biosynthesis; 5-aminolevulinate from L-glutamyl-tRNA(Glu): step 1/2. Catalyzes the NADPH-dependent reduction of glutamyl-tRNA(Glu) to glutamate 1-semialdehyde (GSA). The chain is Glutamyl-tRNA reductase from Helicobacter pylori (strain HPAG1).